Consider the following 755-residue polypeptide: Atypical kinase coq-8, mitochondrial (755 aa).

The disordered stretch occupies residues Gln57 to Pro78. Residues Lys67–Pro78 are compositionally biased toward polar residues. Residues Phe435–Val443 and Lys457 contribute to the ATP site. Asp587 acts as the Proton acceptor in catalysis.

The protein belongs to the protein kinase superfamily. ADCK protein kinase family.

The protein localises to the mitochondrion. The protein operates within cofactor biosynthesis; ubiquinone biosynthesis. Its function is as follows. Atypical kinase involved in the biosynthesis of coenzyme Q, also named ubiquinone, an essential lipid-soluble electron transporter for aerobic cellular respiration. Its substrate specificity is still unclear: may act as a protein kinase that mediates phosphorylation of coq-3. According to other reports, acts as a small molecule kinase, possibly a lipid kinase that phosphorylates a prenyl lipid in the ubiquinone biosynthesis pathway, as suggested by its ability to bind coenzyme Q lipid intermediates. The polypeptide is Atypical kinase coq-8, mitochondrial (coq-8) (Caenorhabditis elegans).